A 176-amino-acid chain; its full sequence is Major non-capsid protein (176 aa).

Belongs to the tenuiviruses NCP family.

It localises to the host cytoplasm. Functionally, induces the formation of large intracellular inclusion body, organized in amorphous and crystalline arrays. Presumably the main cause of the stripe disease observed in host. This Rottboellia (Sorghum) protein is Major non-capsid protein.